Here is a 156-residue protein sequence, read N- to C-terminus: 6,7-dimethyl-8-ribityllumazine synthase (156 aa).

Residues Phe-22, 57–59 (AYE), and 81–83 (TVI) each bind 5-amino-6-(D-ribitylamino)uracil. 86 to 87 (GT) provides a ligand contact to (2S)-2-hydroxy-3-oxobutyl phosphate. His-89 functions as the Proton donor in the catalytic mechanism. Phe-114 is a 5-amino-6-(D-ribitylamino)uracil binding site. Arg-128 lines the (2S)-2-hydroxy-3-oxobutyl phosphate pocket.

Belongs to the DMRL synthase family. Forms an icosahedral capsid composed of 60 subunits, arranged as a dodecamer of pentamers.

It catalyses the reaction (2S)-2-hydroxy-3-oxobutyl phosphate + 5-amino-6-(D-ribitylamino)uracil = 6,7-dimethyl-8-(1-D-ribityl)lumazine + phosphate + 2 H2O + H(+). It functions in the pathway cofactor biosynthesis; riboflavin biosynthesis; riboflavin from 2-hydroxy-3-oxobutyl phosphate and 5-amino-6-(D-ribitylamino)uracil: step 1/2. Its function is as follows. Catalyzes the formation of 6,7-dimethyl-8-ribityllumazine by condensation of 5-amino-6-(D-ribitylamino)uracil with 3,4-dihydroxy-2-butanone 4-phosphate. This is the penultimate step in the biosynthesis of riboflavin. In Sodalis glossinidius (strain morsitans), this protein is 6,7-dimethyl-8-ribityllumazine synthase.